The chain runs to 602 residues: Elongation factor 4 (602 aa).

In terms of domain architecture, tr-type G spans 7–189 (KYIRNFSIVA…AIVNKVPAPE (183 aa)). Residues 19-24 (DHGKST) and 136-139 (NKID) each bind GTP.

Belongs to the TRAFAC class translation factor GTPase superfamily. Classic translation factor GTPase family. LepA subfamily.

The protein localises to the cell membrane. The catalysed reaction is GTP + H2O = GDP + phosphate + H(+). Functionally, required for accurate and efficient protein synthesis under certain stress conditions. May act as a fidelity factor of the translation reaction, by catalyzing a one-codon backward translocation of tRNAs on improperly translocated ribosomes. Back-translocation proceeds from a post-translocation (POST) complex to a pre-translocation (PRE) complex, thus giving elongation factor G a second chance to translocate the tRNAs correctly. Binds to ribosomes in a GTP-dependent manner. This chain is Elongation factor 4, found in Clostridium botulinum (strain Okra / Type B1).